A 751-amino-acid polypeptide reads, in one-letter code: C2 domain-containing protein At1g53590 (751 aa).

2 consecutive transmembrane segments (helical) span residues 2–22 (ESSL…ISSL) and 26–46 (HAFF…RYVM). One can recognise an SMP-LTD domain in the interval 68–262 (DSESVRWMNY…QPNMLVVDME (195 aa)). One can recognise a C2 domain in the interval 267–381 (PTSENWFFVD…RGGQRNDMWL (115 aa)). Residues Asp298, Asp304, Asp352, Asp354, and Asp359 each contribute to the Ca(2+) site. Disordered regions lie at residues 469-519 (QIWE…GRGL) and 572-751 (SGPL…SSSK). Over residues 472-482 (EPRKGKSRRLD) the composition is skewed to basic and acidic residues. The span at 483–502 (SQIQRTPNDESLSNGSSSTD) shows a compositional bias: polar residues. Positions 590-611 (NSGKGHMKDVAKSFLKQAEKSA) are enriched in basic and acidic residues. The span at 612-624 (KQIKHAFSRKGSM) shows a compositional bias: basic residues. Residues 625 to 634 (KPRDGHKEIV) show a composition bias toward basic and acidic residues. The segment covering 639-651 (SGTDSESSDDDDA) has biased composition (acidic residues). Basic and acidic residues-rich tracts occupy residues 664-681 (KLTR…DHVD) and 703-751 (VEAK…SSSK). The stretch at 701–728 (TDVEAKEEKLKEAAESETRDMDTAMNIK) forms a coiled coil.

It belongs to the extended synaptotagmin family. Ca(2+) is required as a cofactor.

It is found in the membrane. The chain is C2 domain-containing protein At1g53590 (NTMC2T6.1) from Arabidopsis thaliana (Mouse-ear cress).